Reading from the N-terminus, the 896-residue chain is MSDNRLDTARRHSLFLARQLDNGKLKPEIFLPMLDKVLTEADFQAFADWGEIRAEENEEELARQLRELRRYVVSQIIVRDINRISDLNEVTRTITLFADFAVNTALDFAYAYYRDMYGTPIGRYTKSPQHLSVVAMGKAGGYELNVSSDIDLIFVYPESGDTDGRRERGNQEFFTKVGQKLIALLNDITADGQVFRVDMRLRPDGDSGALVLSETALEQYLITQGREWERYAWCKGRVVTPYPNDIKALVRPFVFRKYLDYGAYEAMRKLHRQISSEVSKKGMADNIKLGAGGIREVEFIAQIFQMIRGGQMRALQLKGTQETLKKLAELGIMLSEHVETLLAAYRFLRDVEHRLQYWDDQQTQTLPTSPEQRQLLAESMGFDSYSAFSDGLNVHRNKVNQLFNEILSEPEEQTQDNSEWQWAWQDKPDEEGRRCRLKAHGFDAETVAARLDQIRHGHKYRHLSAHAQPRFDAVVPLFVQAAAAQSNPTDTLMRLLDFLENISRRSAYLAFLNEHPQTLAQLAQIMGQSSWVAAYLNKYPILLDELISAQLLDTAFDWQALAAALSDDLKACGGDTEAQMDTLRRFQHAQVFRLAVQDLAGLWTVESLSDQLSALADTILAAALLCAWADMPKKHRDTPQFAVVGYGKLGGKELGYASDLDLVYLYDDPHPDAGDVYSRLARRLTNWLSAATGAGSLYETDLRLRPNGDAGFLAHSIAAFEKYQRENAWTWEHQSLTRARFICGTSEIQTAFDRIRTEILTAERDQTALAGEIIEMREKMFPTHPPADSNVKYARGGVVDVEFIVQYLILAHARQYPQLLDNYGNIALLNISADCGLIDKTLAGQSRTAYRFYRRQQHNTKLRDAAKTEVTGELLAHYGNVRKLWREVFGEEAATV.

An adenylyl removase region spans residues 1 to 411 (MSDNRLDTAR…LFNEILSEPE (411 aa)). Residues 417-896 (NSEWQWAWQD…EVFGEEAATV (480 aa)) form an adenylyl transferase region.

The protein belongs to the GlnE family. It depends on Mg(2+) as a cofactor.

It carries out the reaction [glutamine synthetase]-O(4)-(5'-adenylyl)-L-tyrosine + phosphate = [glutamine synthetase]-L-tyrosine + ADP. It catalyses the reaction [glutamine synthetase]-L-tyrosine + ATP = [glutamine synthetase]-O(4)-(5'-adenylyl)-L-tyrosine + diphosphate. Involved in the regulation of glutamine synthetase GlnA, a key enzyme in the process to assimilate ammonia. When cellular nitrogen levels are high, the C-terminal adenylyl transferase (AT) inactivates GlnA by covalent transfer of an adenylyl group from ATP to specific tyrosine residue of GlnA, thus reducing its activity. Conversely, when nitrogen levels are low, the N-terminal adenylyl removase (AR) activates GlnA by removing the adenylyl group by phosphorolysis, increasing its activity. The regulatory region of GlnE binds the signal transduction protein PII (GlnB) which indicates the nitrogen status of the cell. The protein is Bifunctional glutamine synthetase adenylyltransferase/adenylyl-removing enzyme of Neisseria meningitidis serogroup B (strain ATCC BAA-335 / MC58).